A 228-amino-acid polypeptide reads, in one-letter code: Cytochrome b6-f complex iron-sulfur subunit 2, chloroplastic (228 aa).

A chloroplast-targeting transit peptide spans 1–49 (MASSTLSPVTQLCSSKSGLSSVSQCLLLKPMKINSHGLGKDKRMKVKCM). Residues 71 to 91 (LLLGALSLPTAGMLVPYATFF) traverse the membrane as a helical segment. One can recognise a Rieske domain in the interval 115 to 211 (ASEWLKTHPP…ADIDDGKVVF (97 aa)). 4 residues coordinate [2Fe-2S] cluster: Cys-157, His-159, Cys-175, and His-178. A disulfide bond links Cys-162 and Cys-177.

It belongs to the Rieske iron-sulfur protein family. In terms of assembly, the 4 large subunits of the cytochrome b6-f complex are cytochrome b6, subunit IV (17 kDa polypeptide, petD), cytochrome f and the Rieske protein, while the 4 small subunits are petG, petL, petM and petN. The complex functions as a dimer. The cofactor is [2Fe-2S] cluster.

The protein localises to the plastid. It is found in the chloroplast thylakoid membrane. The enzyme catalyses 2 oxidized [plastocyanin] + a plastoquinol + 2 H(+)(in) = 2 reduced [plastocyanin] + a plastoquinone + 4 H(+)(out). Component of the cytochrome b6-f complex, which mediates electron transfer between photosystem II (PSII) and photosystem I (PSI), cyclic electron flow around PSI, and state transitions. The chain is Cytochrome b6-f complex iron-sulfur subunit 2, chloroplastic (petC2) from Nicotiana tabacum (Common tobacco).